The primary structure comprises 512 residues: ATP synthase subunit alpha (512 aa).

169–176 lines the ATP pocket; that stretch reads GDRQTGKT.

The protein belongs to the ATPase alpha/beta chains family. As to quaternary structure, F-type ATPases have 2 components, CF(1) - the catalytic core - and CF(0) - the membrane proton channel. CF(1) has five subunits: alpha(3), beta(3), gamma(1), delta(1), epsilon(1). CF(0) has three main subunits: a(1), b(2) and c(9-12). The alpha and beta chains form an alternating ring which encloses part of the gamma chain. CF(1) is attached to CF(0) by a central stalk formed by the gamma and epsilon chains, while a peripheral stalk is formed by the delta and b chains.

Its subcellular location is the cell inner membrane. It catalyses the reaction ATP + H2O + 4 H(+)(in) = ADP + phosphate + 5 H(+)(out). In terms of biological role, produces ATP from ADP in the presence of a proton gradient across the membrane. The alpha chain is a regulatory subunit. The chain is ATP synthase subunit alpha from Ruegeria pomeroyi (strain ATCC 700808 / DSM 15171 / DSS-3) (Silicibacter pomeroyi).